The following is a 146-amino-acid chain: MKFSLLSAIAAAVFVPFTSATPLASTADLSYDTHYDDPSLPLSGVTCSDGDNGMITKGYNTAGEIPNYPHVGGAFTVETWNSPNCGKCYKVTYNAKTIFLTAIDHSNSGFNIAKKSMDVLTNGRAEELGRIKVTYEEVASSLCGLK.

An N-terminal signal peptide occupies residues 1–20 (MKFSLLSAIAAAVFVPFTSA).

It belongs to the cerato-platanin family. Glycosylated.

It is found in the secreted. In Coccidioides posadasii (strain C735) (Valley fever fungus), this protein is Heat-stable 19 kDa antigen (CSA).